The primary structure comprises 356 residues: Sulfate/thiosulfate import ATP-binding protein CysA (356 aa).

An ABC transporter domain is found at Ile-3–Leu-237. Residue Gly-35–Thr-42 coordinates ATP.

It belongs to the ABC transporter superfamily. Sulfate/tungstate importer (TC 3.A.1.6) family. In terms of assembly, the complex is composed of two ATP-binding proteins (CysA), two transmembrane proteins (CysT and CysW) and a solute-binding protein (CysP).

The protein resides in the cell inner membrane. It carries out the reaction sulfate(out) + ATP + H2O = sulfate(in) + ADP + phosphate + H(+). The catalysed reaction is thiosulfate(out) + ATP + H2O = thiosulfate(in) + ADP + phosphate + H(+). Part of the ABC transporter complex CysAWTP involved in sulfate/thiosulfate import. Responsible for energy coupling to the transport system. The protein is Sulfate/thiosulfate import ATP-binding protein CysA of Leptospira interrogans serogroup Icterohaemorrhagiae serovar copenhageni (strain Fiocruz L1-130).